We begin with the raw amino-acid sequence, 480 residues long: MNPSISTAGAVVDDFQMSCRFSNFGDHAPESFDSLSCGACFYFIFMLVEHYKDRYVASLCEDTFGVLVCPVDVSDKICNCYNREYVYNIPEFALNSSRIKPLNHLRLDPPLPFQFDLIVKDCCSAARYCCRNTLVKYHHRVDDSPCPPTWDGWNCFDSATPGVVFKQCPNYIYGGSNIKTDYDRLSQKVCRSNGWATPEVNAAAREHTDYTGCMSNGDVEARILAGLLTYSASVIFLIPAVFLLTLLRPIRCQPMFILHRHLLISCLLYGAFYLITVSLFVVNDAPLSSQVFQNHLFCRLLFSIQLRYLRLTNFTWMLAEAVYLWRLLHTAQHSEGETLRSYKVICWGVPGVITVVYIFVRSLNDDVGMCWIENSTVAWIEWMIITPSLLAMGVNLLLLGLIVYILVKKLRCDPHLERIQYRKAVRGALMLIPVFGVQQLLTIYRFRNVCLIYRLLHKSFCRRMCSEILVITSGEAGSRS.

The Extracellular portion of the chain corresponds to 1–222 (MNPSISTAGA…CMSNGDVEAR (222 aa)). Asn95 is a glycosylation site (N-linked (GlcNAc...) asparagine). The chain crosses the membrane as a helical span at residues 223 to 243 (ILAGLLTYSASVIFLIPAVFL). Topologically, residues 244-261 (LTLLRPIRCQPMFILHRH) are cytoplasmic. A helical transmembrane segment spans residues 262–282 (LLISCLLYGAFYLITVSLFVV). Residues 283 to 305 (NDAPLSSQVFQNHLFCRLLFSIQ) are Extracellular-facing. Residues 306-328 (LRYLRLTNFTWMLAEAVYLWRLL) traverse the membrane as a helical segment. Topologically, residues 329-343 (HTAQHSEGETLRSYK) are cytoplasmic. Residues 344–364 (VICWGVPGVITVVYIFVRSLN) form a helical membrane-spanning segment. The Extracellular portion of the chain corresponds to 365–386 (DDVGMCWIENSTVAWIEWMIIT). A helical transmembrane segment spans residues 387–407 (PSLLAMGVNLLLLGLIVYILV). Residues 408–423 (KKLRCDPHLERIQYRK) lie on the Cytoplasmic side of the membrane. Residues 424-444 (AVRGALMLIPVFGVQQLLTIY) form a helical membrane-spanning segment. At 445-480 (RFRNVCLIYRLLHKSFCRRMCSEILVITSGEAGSRS) the chain is on the extracellular side.

This sequence belongs to the G-protein coupled receptor 2 family. In terms of tissue distribution, present in the head body-wall muscles from the L1 larval stage through to adulthood. Also expressed between L4 and the adult molt in vulval vm1 muscle cells. These cells play a role in opening the vulva during egg laying.

It localises to the cell membrane. Its function is as follows. Not known. Putative receptor. The protein is G-protein coupled receptor seb-2 of Caenorhabditis elegans.